Consider the following 383-residue polypeptide: Prokineticin receptor 2 (383 aa).

The Extracellular portion of the chain corresponds to 1-54; the sequence is MGDQNGNTSFAPDLNPPQDHVSLLPLNYSYGDYDIPLDDDEDVTKTQTFFAAKI. N-linked (GlcNAc...) asparagine glycans are attached at residues asparagine 7 and asparagine 27. A helical membrane pass occupies residues 55 to 75; it reads VIGVALAGIMLVCGVGNFVFI. Residues 76–89 are Cytoplasmic-facing; that stretch reads AALARYKKLRNLTN. Residues 90–110 traverse the membrane as a helical segment; it reads LLIANLAISDFLVAIVCCPFE. Over 111–136 the chain is Extracellular; the sequence is MDYYVVRQLSWEHGHVLCASVNYLRT. Residues cysteine 128 and cysteine 207 are joined by a disulfide bond. A helical membrane pass occupies residues 137–157; sequence VSLYVSTNALLAIAIDRYLAI. At 158 to 170 the chain is on the cytoplasmic side; the sequence is VHPLKRMNYQTAS. The chain crosses the membrane as a helical span at residues 171-191; sequence FLIALVWMVSILIAIPSAYFT. At 192–222 the chain is on the extracellular side; the sequence is TETILVIVKNQEKLFCGQIWPVDQQLYYKSY. The helical transmembrane segment at 223 to 243 threads the bilayer; that stretch reads FLFVFGLEFVGPVVTMTLCYA. Over 244–272 the chain is Cytoplasmic; the sequence is RISQELWFKAVPGFQTEQIRKRLRCRRKT. Residues 273-293 form a helical membrane-spanning segment; the sequence is VLLLMGILTAYVLCWAPFYGF. Topologically, residues 294-312 are extracellular; that stretch reads TIVRDFFPTLVVKEKHYLT. Residues 313 to 333 traverse the membrane as a helical segment; that stretch reads AFYVVECIAMSNSMINTICFV. Over 334–383 the chain is Cytoplasmic; that stretch reads TVKNNTMKYFKKMLLLHWRPSHYGSKSSADLDLKTSGVPATEEVDCIRLK.

It belongs to the G-protein coupled receptor 1 family. Homodimer. Abundantly expressed in the CNS and reproductive organs with the highest levels in the cerebrum, cerebellum, testis and ovary.

It is found in the cell membrane. Its function is as follows. Receptor for prokineticin 2. Exclusively coupled to the G(q) subclass of heteromeric G proteins. Activation leads to mobilization of calcium, stimulation of phosphoinositide turnover and activation of p44/p42 mitogen-activated protein kinase. The chain is Prokineticin receptor 2 (Prokr2) from Rattus norvegicus (Rat).